A 110-amino-acid polypeptide reads, in one-letter code: Proline-rich protein 15-like protein A (110 aa).

Disordered regions lie at residues 29-51 (IAGDHSSNGGEAPGTTDAATDSQ) and 65-110 (TKGR…KSGK). A compositionally biased stretch (basic residues) spans 65–85 (TKGRHVKVSHSGRFKEKKRIR). A compositionally biased stretch (polar residues) spans 100 to 110 (TTANENNKSGK).

Belongs to the PRR15 family.

The protein is Proline-rich protein 15-like protein A (prr15la) of Danio rerio (Zebrafish).